The primary structure comprises 257 residues: UPF0246 protein Rsph17025_0016 (257 aa).

This sequence belongs to the UPF0246 family.

The chain is UPF0246 protein Rsph17025_0016 from Cereibacter sphaeroides (strain ATCC 17025 / ATH 2.4.3) (Rhodobacter sphaeroides).